Here is a 436-residue protein sequence, read N- to C-terminus: Gustatory receptor for sugar taste 61a (436 aa).

Residues 1–78 (MSRTSDDIRK…PQDVKFKVRS (78 aa)) are Cytoplasmic-facing. The chain crosses the membrane as a helical span at residues 79–99 (IGLAVTGLFLLLGGMKTLVGA). The Extracellular segment spans residues 100-111 (NILFTEGLNAKN). The helical transmembrane segment at 112–132 (IVGLVFLIVGMVNWLNFVGFA) threads the bilayer. Topologically, residues 133–164 (RSWSHIMLPWSSVDILMLFPPYKRGKRSLRSK) are cytoplasmic. Residues 165–185 (VNVLALSVVVLAVGDHMLYYA) form a helical membrane-spanning segment. At 186–214 (SGYCSYSMHILQCHTNHSRITFGLYLEKE) the chain is on the extracellular side. N-linked (GlcNAc...) asparagine glycosylation is present at N201. Residues 215-235 (FSDIMFIMPFNIFSMCYGFWL) form a helical membrane-spanning segment. Residues 236 to 237 (NG) lie on the Cytoplasmic side of the membrane. The helical transmembrane segment at 238–258 (AFTFLWNFMDIFIVMTSIGLA) threads the bilayer. The Extracellular segment spans residues 259–304 (QRFQQFAARVGALEGRHVPEALWYDIRRDHIRLCELASLVEASMSN). A helical membrane pass occupies residues 305–325 (IVFVSCANNVYVICNQALAIF). Residues 326–334 (TKLRHPINY) are Cytoplasmic-facing. A helical membrane pass occupies residues 335–355 (VYFWYSLIFLLARTSLVFMTA). The Extracellular portion of the chain corresponds to 356-436 (SKIHDASLLP…AKSHKGLRCA (81 aa)).

Belongs to the insect chemoreceptor superfamily. Gustatory receptor (GR) family. Gr5a subfamily. Expressed in sweet sensing neurons of classical chemosensory sensilla, but also in two supersensitive neurons of atypical taste sensilla.

It localises to the cell membrane. Functionally, one of the few identified sugar gustatory receptors identified so far with glucose being its primary ligand and which mediates acceptance behavior. The polypeptide is Gustatory receptor for sugar taste 61a (Gr61a) (Drosophila melanogaster (Fruit fly)).